The sequence spans 156 residues: Small ribosomal subunit protein uS7 (156 aa).

It belongs to the universal ribosomal protein uS7 family. Part of the 30S ribosomal subunit. Contacts proteins S9 and S11.

Functionally, one of the primary rRNA binding proteins, it binds directly to 16S rRNA where it nucleates assembly of the head domain of the 30S subunit. Is located at the subunit interface close to the decoding center, probably blocks exit of the E-site tRNA. This Phytoplasma mali (strain AT) protein is Small ribosomal subunit protein uS7.